We begin with the raw amino-acid sequence, 615 residues long: Threonine--tRNA ligase (615 aa).

The interval methionine 1–threonine 132 is editing domain. Positions proline 196–proline 495 are catalytic. Residues cysteine 288, histidine 340, and histidine 464 each coordinate Zn(2+).

The protein belongs to the class-II aminoacyl-tRNA synthetase family. As to quaternary structure, homodimer. The cofactor is Zn(2+).

The protein localises to the cytoplasm. The enzyme catalyses tRNA(Thr) + L-threonine + ATP = L-threonyl-tRNA(Thr) + AMP + diphosphate + H(+). Functionally, catalyzes the attachment of threonine to tRNA(Thr) in a two-step reaction: L-threonine is first activated by ATP to form Thr-AMP and then transferred to the acceptor end of tRNA(Thr). Also edits incorrectly charged L-seryl-tRNA(Thr). The protein is Threonine--tRNA ligase (thrS) of Cenarchaeum symbiosum (strain A).